A 1372-amino-acid polypeptide reads, in one-letter code: DNA-directed RNA polymerase subunit beta' (1372 aa).

Zn(2+)-binding residues include C69, C71, C84, and C87. Mg(2+) is bound by residues D460, D462, and D464. Zn(2+) is bound by residues C808, C882, C889, and C892.

It belongs to the RNA polymerase beta' chain family. As to quaternary structure, the RNAP catalytic core consists of 2 alpha, 1 beta, 1 beta' and 1 omega subunit. When a sigma factor is associated with the core the holoenzyme is formed, which can initiate transcription. Requires Mg(2+) as cofactor. The cofactor is Zn(2+).

It catalyses the reaction RNA(n) + a ribonucleoside 5'-triphosphate = RNA(n+1) + diphosphate. DNA-dependent RNA polymerase catalyzes the transcription of DNA into RNA using the four ribonucleoside triphosphates as substrates. The protein is DNA-directed RNA polymerase subunit beta' of Rickettsia typhi (strain ATCC VR-144 / Wilmington).